A 330-amino-acid chain; its full sequence is RNA/RNP complex-1-interacting phosphatase (330 aa).

The span at 1-12 shows a compositional bias: basic residues; that stretch reads MSQWHHPRSGWG. The interval 1-32 is disordered; it reads MSQWHHPRSGWGRRRDFSGRSSAKKKGGNHIP. Positions 61-208 constitute a Tyrosine-protein phosphatase domain; sequence FEKKLAPEEC…LQNGPIRKNW (148 aa). Catalysis depends on C152, which acts as the Phosphocysteine intermediate. A substrate-binding site is contributed by 153 to 158; that stretch reads THGLNR. Residue R158 is the Proton donor/acceptor of the active site.

Belongs to the protein-tyrosine phosphatase family. Non-receptor class dual specificity subfamily. In terms of assembly, monomer. May interact with SFRS7 and SFRS9/SRP30C.

It localises to the nucleus. The protein localises to the nucleus speckle. In terms of biological role, possesses RNA 5'-triphosphatase and diphosphatase activities, but displays a poor protein-tyrosine phosphatase activity. In addition, has phosphatase activity with ATP, ADP and O-methylfluorescein phosphate (in vitro). Binds to RNA. May participate in nuclear mRNA metabolism. This chain is RNA/RNP complex-1-interacting phosphatase, found in Homo sapiens (Human).